The following is a 242-amino-acid chain: DNA repair protein RecO (242 aa).

Belongs to the RecO family. As to quaternary structure, monomer.

Involved in DNA repair and RecF pathway recombination. In Salmonella schwarzengrund (strain CVM19633), this protein is DNA repair protein RecO.